We begin with the raw amino-acid sequence, 294 residues long: 4-hydroxy-tetrahydrodipicolinate synthase (294 aa).

Pyruvate is bound at residue Thr47. Tyr135 functions as the Proton donor/acceptor in the catalytic mechanism. Lys164 (schiff-base intermediate with substrate) is an active-site residue. Residue Val206 coordinates pyruvate.

This sequence belongs to the DapA family. In terms of assembly, homotetramer; dimer of dimers.

The protein localises to the cytoplasm. The catalysed reaction is L-aspartate 4-semialdehyde + pyruvate = (2S,4S)-4-hydroxy-2,3,4,5-tetrahydrodipicolinate + H2O + H(+). It participates in amino-acid biosynthesis; L-lysine biosynthesis via DAP pathway; (S)-tetrahydrodipicolinate from L-aspartate: step 3/4. Catalyzes the condensation of (S)-aspartate-beta-semialdehyde [(S)-ASA] and pyruvate to 4-hydroxy-tetrahydrodipicolinate (HTPA). The sequence is that of 4-hydroxy-tetrahydrodipicolinate synthase from Lachnoclostridium phytofermentans (strain ATCC 700394 / DSM 18823 / ISDg) (Clostridium phytofermentans).